The sequence spans 447 residues: tRNA-2-methylthio-N(6)-dimethylallyladenosine synthase (447 aa).

One can recognise an MTTase N-terminal domain in the interval lysine 3–threonine 120. Positions 12, 49, 83, 157, 161, and 164 each coordinate [4Fe-4S] cluster. Positions arginine 143 to glutamate 375 constitute a Radical SAM core domain. Positions arginine 378–aspartate 442 constitute a TRAM domain.

This sequence belongs to the methylthiotransferase family. MiaB subfamily. As to quaternary structure, monomer. It depends on [4Fe-4S] cluster as a cofactor.

It is found in the cytoplasm. It catalyses the reaction N(6)-dimethylallyladenosine(37) in tRNA + (sulfur carrier)-SH + AH2 + 2 S-adenosyl-L-methionine = 2-methylsulfanyl-N(6)-dimethylallyladenosine(37) in tRNA + (sulfur carrier)-H + 5'-deoxyadenosine + L-methionine + A + S-adenosyl-L-homocysteine + 2 H(+). In terms of biological role, catalyzes the methylthiolation of N6-(dimethylallyl)adenosine (i(6)A), leading to the formation of 2-methylthio-N6-(dimethylallyl)adenosine (ms(2)i(6)A) at position 37 in tRNAs that read codons beginning with uridine. This is tRNA-2-methylthio-N(6)-dimethylallyladenosine synthase from Ectopseudomonas mendocina (strain ymp) (Pseudomonas mendocina).